The following is a 1407-amino-acid chain: YEATS domain-containing protein 2 (1407 aa).

A Glycyl lysine isopeptide (Lys-Gly) (interchain with G-Cter in SUMO2) cross-link involves residue lysine 9. A coiled-coil region spans residues 54-80 (MKNKEHEIDVIDQRLIEARRMMDKLRA). Lysine 113 is covalently cross-linked (Glycyl lysine isopeptide (Lys-Gly) (interchain with G-Cter in SUMO2)). A disordered region spans residues 116–196 (LESPSRSSSP…SHKRELRNAD (81 aa)). Phosphoserine occurs at positions 118, 120, and 157. Residues 119-148 (PSRSSSPTNQRSETPSANHSESDSLSQHND) show a composition bias toward polar residues. Basic and acidic residues predominate over residues 149–165 (FLSDKDNNSNVDVEERP). Lysine 189 participates in a covalent cross-link: Glycyl lysine isopeptide (Lys-Gly) (interchain with G-Cter in SUMO2). Residues 201-346 (ETSRLFVKKT…EDSVYPQSSE (146 aa)) form the YEATS domain. Histone H3K27cr binding regions lie at residues 260–262 (HPS) and 283–285 (WGE). Position 406 is a phosphothreonine (threonine 406). 5 positions are modified to phosphoserine: serine 446, serine 462, serine 464, serine 470, and serine 472. Residues 462-540 (SGSPISTPSP…GTGSPIPKIH (79 aa)) form a disordered region. Threonine 477 carries the phosphothreonine modification. Lysine 486 participates in a covalent cross-link: Glycyl lysine isopeptide (Lys-Gly) (interchain with G-Cter in SUMO2). The segment covering 511–520 (STPSTGSPTS) has biased composition (low complexity). Serine 534 is subject to Phosphoserine. A Glycyl lysine isopeptide (Lys-Gly) (interchain with G-Cter in SUMO2) cross-link involves residue lysine 550. Serine 573 carries the post-translational modification Phosphoserine. Lysine 590 is covalently cross-linked (Glycyl lysine isopeptide (Lys-Gly) (interchain with G-Cter in SUMO2)). Serine 625 carries the post-translational modification Phosphoserine. Glycyl lysine isopeptide (Lys-Gly) (interchain with G-Cter in SUMO2) cross-links involve residues lysine 647 and lysine 771. The tract at residues 791–833 (SGSAAAGGSGSSGAGGGSGGGGGSGAGGTPSTSGPGGGPQHLT) is disordered. Over residues 795 to 829 (AAGGSGSSGAGGGSGGGGGSGAGGTPSTSGPGGGP) the composition is skewed to gly residues. A Glycyl lysine isopeptide (Lys-Gly) (interchain with G-Cter in SUMO2) cross-link involves residue lysine 908. Lysine 1095 is covalently cross-linked (Glycyl lysine isopeptide (Lys-Gly) (interchain with G-Cter in SUMO1); alternate). Lysine 1095 participates in a covalent cross-link: Glycyl lysine isopeptide (Lys-Gly) (interchain with G-Cter in SUMO2); alternate. Lysine 1115 is covalently cross-linked (Glycyl lysine isopeptide (Lys-Gly) (interchain with G-Cter in SUMO2)). Threonine 1204 is subject to Phosphothreonine. Residues lysine 1207 and lysine 1270 each participate in a glycyl lysine isopeptide (Lys-Gly) (interchain with G-Cter in SUMO2) cross-link.

Component of the ADA2A-containing complex (ATAC), composed of KAT14, KAT2A, TADA2L, TADA3L, ZZ3, MBIP, WDR5, YEATS2, SGF29 and DR1.

The protein localises to the nucleus. Chromatin reader component of the ATAC complex, a complex with histone acetyltransferase activity on histones H3 and H4. YEATS2 specifically recognizes and binds histone H3 crotonylated at 'Lys-27' (H3K27cr). Crotonylation marks active promoters and enhancers and confers resistance to transcriptional repressors. The chain is YEATS domain-containing protein 2 from Mus musculus (Mouse).